The primary structure comprises 286 residues: Probable transport system permease protein NifC (286 aa).

The next 6 membrane-spanning stretches (helical) occupy residues 34–54 (LFLALTAIYFVMLIFPIISMI), 75–95 (IILSFVTSLIALIFTFIIGTP), 114–134 (IFVEIPVVLPPAVAGIALLLA), 152–172 (VIFTSTAVIIAQFFVSSALYV), 216–236 (GLILAWIRSLGEFGATLMFAG), and 257–277 (IKMATAFATILYIMTFVLLLL). One can recognise an ABC transmembrane type-1 domain in the interval 75 to 278 (IILSFVTSLI…IMTFVLLLLV (204 aa)).

This sequence belongs to the binding-protein-dependent transport system permease family. CysTW subfamily.

The protein resides in the cell membrane. Its function is as follows. May be involved in molybdenum transport. The sequence is that of Probable transport system permease protein NifC (nifC) from Clostridium pasteurianum.